The sequence spans 169 residues: Ferric-chelate reductase (NAD(P)H) (169 aa).

An NADP(+)-binding site is contributed by Y7. Residues Q27–T31, C45–T52, R82–S84, and K89 each bind FMN. Residues H126 and Y147 to K154 each bind NADP(+).

This sequence belongs to the non-flavoprotein flavin reductase family. Homodimer. FMN serves as cofactor. The cofactor is FAD.

It catalyses the reaction 2 a Fe(II)-siderophore + NAD(+) + H(+) = 2 a Fe(III)-siderophore + NADH. The enzyme catalyses 2 a Fe(II)-siderophore + NADP(+) + H(+) = 2 a Fe(III)-siderophore + NADPH. Catalyzes the reduction of bound ferric iron (Fe(3+)) in a variety of iron chelators (siderophores) using NAD(P)H as the electron donor, resulting in the release of Fe(2+). Not active with uncomplexed Fe(3+). Also reduces FMN and FAD, but not riboflavin. The sequence is that of Ferric-chelate reductase (NAD(P)H) from Archaeoglobus fulgidus (strain ATCC 49558 / DSM 4304 / JCM 9628 / NBRC 100126 / VC-16).